The following is a 496-amino-acid chain: Probable cytosol aminopeptidase (496 aa).

2 residues coordinate Mn(2+): K258 and D263. The active site involves K270. The Mn(2+) site is built by D281, D340, and E342. The active site involves R344.

It belongs to the peptidase M17 family. The cofactor is Mn(2+).

It is found in the cytoplasm. It carries out the reaction Release of an N-terminal amino acid, Xaa-|-Yaa-, in which Xaa is preferably Leu, but may be other amino acids including Pro although not Arg or Lys, and Yaa may be Pro. Amino acid amides and methyl esters are also readily hydrolyzed, but rates on arylamides are exceedingly low.. It catalyses the reaction Release of an N-terminal amino acid, preferentially leucine, but not glutamic or aspartic acids.. Functionally, presumably involved in the processing and regular turnover of intracellular proteins. Catalyzes the removal of unsubstituted N-terminal amino acids from various peptides. The chain is Probable cytosol aminopeptidase from Helicobacter pylori (strain HPAG1).